The chain runs to 215 residues: Adenylate kinase (215 aa).

10-15 provides a ligand contact to ATP; that stretch reads GAGKGT. An NMP region spans residues 30-59; the sequence is STGDMLRAAIKAQTPMGKMAKEFMDAGKLV. AMP contacts are provided by residues threonine 31, arginine 36, 57-59, 85-88, and glutamine 92; these read KLV and GFPR. Residues 122–159 form an LID region; that stretch reads GRRVHPASGRTYHITYNPPKVDDKDNETGDDLIQREDD. Residues arginine 123 and 132–133 each bind ATP; that span reads TY. AMP is bound by residues arginine 156 and arginine 167. Glutamine 201 serves as a coordination point for ATP.

This sequence belongs to the adenylate kinase family. Monomer.

Its subcellular location is the cytoplasm. The catalysed reaction is AMP + ATP = 2 ADP. The protein operates within purine metabolism; AMP biosynthesis via salvage pathway; AMP from ADP: step 1/1. Its function is as follows. Catalyzes the reversible transfer of the terminal phosphate group between ATP and AMP. Plays an important role in cellular energy homeostasis and in adenine nucleotide metabolism. In Hydrogenovibrio crunogenus (strain DSM 25203 / XCL-2) (Thiomicrospira crunogena), this protein is Adenylate kinase.